The following is a 389-amino-acid chain: Probable dual-specificity RNA methyltransferase RlmN (389 aa).

Residues 1–23 (MTTQHPDTPETGITPGGTSGAFR) form a disordered region. The active-site Proton acceptor is Glu-127. The 244-residue stretch at 133–376 (YPTRTTLCIS…ATLRDTRGQD (244 aa)) folds into the Radical SAM core domain. Cys-140 and Cys-381 are oxidised to a cystine. [4Fe-4S] cluster is bound by residues Cys-147, Cys-151, and Cys-154. Residues 202 to 203 (GE), Ser-236, 259 to 261 (SLH), and Asn-338 each bind S-adenosyl-L-methionine. Cys-381 (S-methylcysteine intermediate) is an active-site residue.

Belongs to the radical SAM superfamily. RlmN family. Requires [4Fe-4S] cluster as cofactor.

Its subcellular location is the cytoplasm. The enzyme catalyses adenosine(2503) in 23S rRNA + 2 reduced [2Fe-2S]-[ferredoxin] + 2 S-adenosyl-L-methionine = 2-methyladenosine(2503) in 23S rRNA + 5'-deoxyadenosine + L-methionine + 2 oxidized [2Fe-2S]-[ferredoxin] + S-adenosyl-L-homocysteine. The catalysed reaction is adenosine(37) in tRNA + 2 reduced [2Fe-2S]-[ferredoxin] + 2 S-adenosyl-L-methionine = 2-methyladenosine(37) in tRNA + 5'-deoxyadenosine + L-methionine + 2 oxidized [2Fe-2S]-[ferredoxin] + S-adenosyl-L-homocysteine. Specifically methylates position 2 of adenine 2503 in 23S rRNA and position 2 of adenine 37 in tRNAs. In Bifidobacterium longum (strain NCC 2705), this protein is Probable dual-specificity RNA methyltransferase RlmN.